We begin with the raw amino-acid sequence, 697 residues long: Potassium channel KAT2 (697 aa).

The Cytoplasmic portion of the chain corresponds to 1–63; sequence MSISCTRNFF…PFDPRFRGWE (63 aa). A helical transmembrane segment spans residues 64–84; sequence MWLVILVIYSAWICPFEFAFI. Over 85–91 the chain is Extracellular; it reads TYKKDAL. Residues 92 to 112 form a helical membrane-spanning segment; it reads FIIDNIVNGFFAIDIILTFFV. Residues 113-134 are Cytoplasmic-facing; that stretch reads AYLDSHSYLLVDKPKKIAIRYL. Residues 135–155 traverse the membrane as a helical segment; the sequence is STWFAFDVCSTAPFQSLSLLF. The Extracellular portion of the chain corresponds to 156–165; that stretch reads KYNGSEIGFR. A glycan (N-linked (GlcNAc...) asparagine) is linked at Asn-158. The helical; Voltage-sensor transmembrane segment at 166–186 threads the bilayer; it reads VLSMLRLWRLRRVSSLFARLE. Over 187-200 the chain is Cytoplasmic; the sequence is KDIRFNYFWTRCTK. A helical membrane pass occupies residues 201-221; the sequence is LISVTLFAVHCAGCFAYLIAD. Over 222–248 the chain is Extracellular; it reads QYHDPTKTWIGAVYPNFKETSVWSRYV. Positions 249 to 268 form an intramembrane region, pore-forming; sequence TALYWSITTLTTTGYGDLHA. Residues 269–272 are Extracellular-facing; it reads ENPR. The helical transmembrane segment at 273 to 293 threads the bilayer; it reads EMLFFVFFMLFNLGFTSYLIG. Residues 294–697 lie on the Cytoplasmic side of the membrane; it reads NMTNLVVHWT…HLYILINENS (404 aa). Residue 377 to 496 coordinates a nucleoside 3',5'-cyclic phosphate; that stretch reads LFHGVSRNFL…RVIMNNLFMK (120 aa). Residues 629 to 697 enclose the KHA domain; it reads RVTIHLKSRD…HLYILINENS (69 aa).

It belongs to the potassium channel family. Plant (TC 1.A.1.4) subfamily. The potassium channel is probably composed of a homo- or heterotetrameric complex of pore-forming subunits. May interact with KAT1. Interacts with SLAC1. As to expression, expressed in guard cells of hypocotyls, stems leaves and petioles. Detected also in the phloem of minor veins and in flower at a lower level.

The protein resides in the membrane. Its function is as follows. Highly selective inward-rectifying potassium channel. This voltage-dependent channel could mediate long-term potassium influx into guard cells leading to stomatal opening. Assuming opened or closed conformations in response to the voltage difference across the membrane, the channel is activated by hyperpolarization. The channel activity is enhanced upon external acidification. The protein is Potassium channel KAT2 (KAT2) of Arabidopsis thaliana (Mouse-ear cress).